The primary structure comprises 317 residues: Periplasmic [NiFe] hydrogenase small subunit 1 (317 aa).

The tat-type signal signal peptide spans 1-49 (MRFSVGLGKEGAEERLARRGVSRRDFLKFCTAIAVTMGMGPAFAPEVAR). [4Fe-4S] cluster is bound by residues C67, C70, C164, C200, H238, C241, C266, and C272. The [3Fe-4S] cluster site is built by C281, C299, and C302.

The protein belongs to the [NiFe]/[NiFeSe] hydrogenase small subunit family. In terms of assembly, heterodimer of a large and a small subunit. The cofactor is [3Fe-4S] cluster. Requires [4Fe-4S] cluster as cofactor. Predicted to be exported by the Tat system. The position of the signal peptide cleavage has not been experimentally proven.

It localises to the periplasm. It carries out the reaction 2 Fe(III)-[cytochrome c3] + H2 = 2 Fe(II)-[cytochrome c3] + 2 H(+). This chain is Periplasmic [NiFe] hydrogenase small subunit 1 (hynB1), found in Nitratidesulfovibrio vulgaris (strain ATCC 29579 / DSM 644 / CCUG 34227 / NCIMB 8303 / VKM B-1760 / Hildenborough) (Desulfovibrio vulgaris).